The following is a 212-amino-acid chain: Ribosomal RNA small subunit methyltransferase G (212 aa).

S-adenosyl-L-methionine is bound by residues Gly-72, Leu-77, 123 to 124 (VE), and Arg-138.

The protein belongs to the methyltransferase superfamily. RNA methyltransferase RsmG family.

The protein resides in the cytoplasm. It carries out the reaction guanosine(527) in 16S rRNA + S-adenosyl-L-methionine = N(7)-methylguanosine(527) in 16S rRNA + S-adenosyl-L-homocysteine. Functionally, specifically methylates the N7 position of guanine in position 527 of 16S rRNA. In Histophilus somni (strain 129Pt) (Haemophilus somnus), this protein is Ribosomal RNA small subunit methyltransferase G.